The sequence spans 439 residues: Methionine aminopeptidase 2-2 (439 aa).

A disordered region spans residues 1 to 90; the sequence is MAAQAPPTDE…SQLFPDKQYP (90 aa). Basic and acidic residues predominate over residues 10–23; that stretch reads ELSKLSVEDADNKP. Positions 35 to 45 are enriched in acidic residues; the sequence is DEDDSEDDAED. Residues 54–68 are compositionally biased toward basic residues; it reads AKKKKKRKPRKKKKN. His-192 lines the substrate pocket. A divalent metal cation is bound by residues Asp-212, Asp-223, and His-292. His-300 serves as a coordination point for substrate. A divalent metal cation-binding residues include Glu-325 and Glu-420.

This sequence belongs to the peptidase M24A family. Methionine aminopeptidase eukaryotic type 2 subfamily. Requires Co(2+) as cofactor. It depends on Zn(2+) as a cofactor. Mn(2+) serves as cofactor. Fe(2+) is required as a cofactor.

It is found in the cytoplasm. The enzyme catalyses Release of N-terminal amino acids, preferentially methionine, from peptides and arylamides.. Its function is as follows. Cotranslationally removes the N-terminal methionine from nascent proteins. The N-terminal methionine is often cleaved when the second residue in the primary sequence is small and uncharged (Met-Ala-, Cys, Gly, Pro, Ser, Thr, or Val). The polypeptide is Methionine aminopeptidase 2-2 (Chaetomium globosum (strain ATCC 6205 / CBS 148.51 / DSM 1962 / NBRC 6347 / NRRL 1970) (Soil fungus)).